We begin with the raw amino-acid sequence, 243 residues long: MRTRVIVNGANGKMGILACETLENHEQFEVVAKLSRQDNLGQSILDTKAQIVVDLTRADCVYENSLTIINHGARPVIGTSGLVETQIDELTKLCKIKQIGGIIAPNFSLGAILMMMLAAKASEYFSEVEIIEGHHQQKLDAPSGTALKTAEMMAAARKKPKNKLPLKELTPGARGGSHHDINIHSLRLPGLLARQEVLFGNIGETLSITHNSIDRRCFMPGIVLACQKVLNLTNLVYGLEHLL.

Residues 9 to 14, 78 to 80, and 104 to 107 contribute to the NAD(+) site; these read GANGKM, GTS, and APNF. The active-site Proton donor/acceptor is the H134. H135 provides a ligand contact to (S)-2,3,4,5-tetrahydrodipicolinate. Residue K138 is the Proton donor of the active site. A (S)-2,3,4,5-tetrahydrodipicolinate-binding site is contributed by 144 to 145; the sequence is GT.

It belongs to the DapB family.

It localises to the cytoplasm. It catalyses the reaction (S)-2,3,4,5-tetrahydrodipicolinate + NAD(+) + H2O = (2S,4S)-4-hydroxy-2,3,4,5-tetrahydrodipicolinate + NADH + H(+). The enzyme catalyses (S)-2,3,4,5-tetrahydrodipicolinate + NADP(+) + H2O = (2S,4S)-4-hydroxy-2,3,4,5-tetrahydrodipicolinate + NADPH + H(+). The protein operates within amino-acid biosynthesis; L-lysine biosynthesis via DAP pathway; (S)-tetrahydrodipicolinate from L-aspartate: step 4/4. Functionally, catalyzes the conversion of 4-hydroxy-tetrahydrodipicolinate (HTPA) to tetrahydrodipicolinate. The polypeptide is 4-hydroxy-tetrahydrodipicolinate reductase (Legionella pneumophila (strain Lens)).